Consider the following 264-residue polypeptide: Thiazole synthase (264 aa).

K98 acts as the Schiff-base intermediate with DXP in catalysis. 1-deoxy-D-xylulose 5-phosphate contacts are provided by residues G159, 185–186 (AG), and 207–208 (AT).

It belongs to the ThiG family. As to quaternary structure, homotetramer. Forms heterodimers with either ThiH or ThiS.

Its subcellular location is the cytoplasm. It catalyses the reaction [ThiS sulfur-carrier protein]-C-terminal-Gly-aminoethanethioate + 2-iminoacetate + 1-deoxy-D-xylulose 5-phosphate = [ThiS sulfur-carrier protein]-C-terminal Gly-Gly + 2-[(2R,5Z)-2-carboxy-4-methylthiazol-5(2H)-ylidene]ethyl phosphate + 2 H2O + H(+). It participates in cofactor biosynthesis; thiamine diphosphate biosynthesis. Functionally, catalyzes the rearrangement of 1-deoxy-D-xylulose 5-phosphate (DXP) to produce the thiazole phosphate moiety of thiamine. Sulfur is provided by the thiocarboxylate moiety of the carrier protein ThiS. In vitro, sulfur can be provided by H(2)S. This is Thiazole synthase from Mycobacterium ulcerans (strain Agy99).